The sequence spans 181 residues: Ankyrin repeat-containing protein YGL242C (181 aa).

Residue Met-1 is modified to N-acetylmethionine. ANK repeat units follow at residues 49–78 (LGNT…EIEI) and 85–120 (DGDT…DPRV). The interval 151-181 (IDSTNGSGDNNEDGEMIDDGPSDDDEEDDKK) is disordered. Acidic residues predominate over residues 160 to 181 (NNEDGEMIDDGPSDDDEEDDKK). A Phosphoserine modification is found at Ser-172.

The chain is Ankyrin repeat-containing protein YGL242C from Saccharomyces cerevisiae (strain ATCC 204508 / S288c) (Baker's yeast).